We begin with the raw amino-acid sequence, 327 residues long: Putative gluconeogenesis factor (327 aa).

It belongs to the gluconeogenesis factor family.

Its subcellular location is the cytoplasm. Required for morphogenesis under gluconeogenic growth conditions. The sequence is that of Putative gluconeogenesis factor (yjiF) from Lactococcus lactis subsp. lactis (strain IL1403) (Streptococcus lactis).